The chain runs to 55 residues: Large ribosomal subunit protein bL33 (55 aa).

Belongs to the bacterial ribosomal protein bL33 family.

This Dehalococcoides mccartyi (strain ATCC BAA-2100 / JCM 16839 / KCTC 5957 / BAV1) protein is Large ribosomal subunit protein bL33.